The sequence spans 157 residues: 3-hydroxyacyl-[acyl-carrier-protein] dehydratase FabZ (157 aa).

H58 is an active-site residue.

This sequence belongs to the thioester dehydratase family. FabZ subfamily.

It is found in the cytoplasm. It catalyses the reaction a (3R)-hydroxyacyl-[ACP] = a (2E)-enoyl-[ACP] + H2O. Its function is as follows. Involved in unsaturated fatty acids biosynthesis. Catalyzes the dehydration of short chain beta-hydroxyacyl-ACPs and long chain saturated and unsaturated beta-hydroxyacyl-ACPs. This Brucella melitensis biotype 2 (strain ATCC 23457) protein is 3-hydroxyacyl-[acyl-carrier-protein] dehydratase FabZ.